The following is a 378-amino-acid chain: UDP-N-acetylglucosamine--N-acetylmuramyl-(pentapeptide) pyrophosphoryl-undecaprenol N-acetylglucosamine transferase (378 aa).

Residues 14-16 (TGG), N125, R165, S193, and Q293 each bind UDP-N-acetyl-alpha-D-glucosamine.

It belongs to the glycosyltransferase 28 family. MurG subfamily.

It localises to the cell inner membrane. The enzyme catalyses di-trans,octa-cis-undecaprenyl diphospho-N-acetyl-alpha-D-muramoyl-L-alanyl-D-glutamyl-meso-2,6-diaminopimeloyl-D-alanyl-D-alanine + UDP-N-acetyl-alpha-D-glucosamine = di-trans,octa-cis-undecaprenyl diphospho-[N-acetyl-alpha-D-glucosaminyl-(1-&gt;4)]-N-acetyl-alpha-D-muramoyl-L-alanyl-D-glutamyl-meso-2,6-diaminopimeloyl-D-alanyl-D-alanine + UDP + H(+). The protein operates within cell wall biogenesis; peptidoglycan biosynthesis. Its function is as follows. Cell wall formation. Catalyzes the transfer of a GlcNAc subunit on undecaprenyl-pyrophosphoryl-MurNAc-pentapeptide (lipid intermediate I) to form undecaprenyl-pyrophosphoryl-MurNAc-(pentapeptide)GlcNAc (lipid intermediate II). The chain is UDP-N-acetylglucosamine--N-acetylmuramyl-(pentapeptide) pyrophosphoryl-undecaprenol N-acetylglucosamine transferase from Bartonella tribocorum (strain CIP 105476 / IBS 506).